The primary structure comprises 305 residues: Axin interactor, dorsalization-associated protein B (305 aa).

Residues 126-137 (ENLEVEEEEEDG) are compositionally biased toward acidic residues. Residues 126–146 (ENLEVEEEEEDGGAGAGSPDL) form a disordered region. Positions 153–220 (GTLLPRLPSE…RKEDTYVHFN (68 aa)) are axin-binding. The C2 Aida-type domain occupies 156–303 (LPRLPSEPGM…LYLHLLQTLL (148 aa)).

It belongs to the AIDA family.

Functionally, acts as a ventralizing factor during embryogenesis. Inhibits axin-mediated JNK activation by binding axin and disrupting axin homodimerization. This in turn antagonizes a Wnt/beta-catenin-independent dorsalization pathway activated by axin/JNK-signaling. This chain is Axin interactor, dorsalization-associated protein B (aida-b), found in Xenopus laevis (African clawed frog).